A 142-amino-acid polypeptide reads, in one-letter code: Large ribosomal subunit protein uL13 (142 aa).

Belongs to the universal ribosomal protein uL13 family. Part of the 50S ribosomal subunit.

In terms of biological role, this protein is one of the early assembly proteins of the 50S ribosomal subunit, although it is not seen to bind rRNA by itself. It is important during the early stages of 50S assembly. This Histophilus somni (strain 129Pt) (Haemophilus somnus) protein is Large ribosomal subunit protein uL13.